The sequence spans 666 residues: Probable potassium transport system protein Kup (666 aa).

A run of 12 helical transmembrane segments spans residues 16–36 (GFIIALGIVYGDIGTSPLYTM), 58–78 (ISLIIWTLTLITTIKYVLIAL), 100–120 (PWLIIPAMIGGATLLSDGALT), 141–161 (IYQNQTNVIITTLVILIVLFG), 165–185 (FGTGFIGKIFGPVMFIWFSFL), 221–241 (IFILGSIFLATTGAEALYSDL), 253–273 (WPFVKVCIVLSYCGQAAWILA), 294–314 (VYLVSLATLAAIIASQALISG), 343–363 (LYIPVINWILFAVTSCTVLYF), 373–393 (YGLAITITMLMTTILLNYYLI), 399–419 (PFLAHLVMTFFALVEFIFFWA), and 424–444 (FMHGGYVVVILALAIVFVMFI).

Belongs to the HAK/KUP transporter (TC 2.A.72) family.

Its subcellular location is the cell membrane. The enzyme catalyses K(+)(in) + H(+)(in) = K(+)(out) + H(+)(out). Functionally, transport of potassium into the cell. Likely operates as a K(+):H(+) symporter. In Streptococcus pyogenes serotype M6 (strain ATCC BAA-946 / MGAS10394), this protein is Probable potassium transport system protein Kup.